A 224-amino-acid chain; its full sequence is Uracil-DNA glycosylase 2 (224 aa).

Residue Asp64 is the Proton acceptor of the active site.

This sequence belongs to the uracil-DNA glycosylase (UDG) superfamily. UNG family.

It is found in the cytoplasm. The catalysed reaction is Hydrolyzes single-stranded DNA or mismatched double-stranded DNA and polynucleotides, releasing free uracil.. In terms of biological role, excises uracil residues from the DNA which can arise as a result of misincorporation of dUMP residues by DNA polymerase or due to deamination of cytosine. This is Uracil-DNA glycosylase 2 from Listeria innocua serovar 6a (strain ATCC BAA-680 / CLIP 11262).